The sequence spans 870 residues: Outer membrane usher protein FimD (870 aa).

The signal sequence occupies residues 1–27; that stretch reads MKKTTWFAGRFPGYVSPLSSVALSVLA. A disulfide bond links C843 and C865.

The protein belongs to the fimbrial export usher family.

Its subcellular location is the cell outer membrane. Involved in the export and assembly of FimA fimbrial subunits across the outer membrane. This chain is Outer membrane usher protein FimD (fimD), found in Salmonella typhimurium (strain LT2 / SGSC1412 / ATCC 700720).